The primary structure comprises 1909 residues: Plexin-B3 (1909 aa).

The signal sequence occupies residues M1 to A44. Residues H45 to V471 enclose the Sema domain. At H45–Q1255 the chain is on the extracellular side. An N-linked (GlcNAc...) asparagine glycan is attached at N51. Cystine bridges form between C98–C107 and C132–C140. An N-linked (GlcNAc...) asparagine glycan is attached at N231. Cystine bridges form between C267/C370, C283/C315, C333/C357, C474/C491, C480/C525, C483/C500, C494/C506, and C562/C580. The region spanning A473–L526 is the PSI 1 domain. N-linked (GlcNAc...) asparagine glycosylation is present at N615. PSI domains follow at residues D620–P682 and D787–P833. N-linked (GlcNAc...) asparagine glycans are attached at residues N802, N900, N957, N1101, and N1218. 4 IPT/TIG domains span residues P835–Q925, P927–T1012, P1015–Q1145, and A1159–E1244. The helical transmembrane segment at A1256–Y1276 threads the bilayer. At R1277–L1909 the chain is on the cytoplasmic side.

This sequence belongs to the plexin family. As to quaternary structure, interacts (via cytoplasmic domain) with RAC1 and ARHGDIA. Binds MET and MST1R. Interacts (via cytoplasmic domain) with FSCN1. Interacts with RIT2/RIN. May form homodimers (via Sema domain). In terms of tissue distribution, expression detected in Purkinje and granular cells in cerebellum, and in brain neocortex but not in corpus callosum. Expressed in glioma cells and embryonic kidney cells (at protein level). Expressed in brain, liver, pancreas and placenta, with weak expression detected also in lung and kidney. Expressed in several glioma cell lines.

It localises to the cell membrane. Its function is as follows. Receptor for SEMA5A that plays a role in axon guidance, invasive growth and cell migration. Stimulates neurite outgrowth and mediates Ca(2+)/Mg(2+)-dependent cell aggregation. In glioma cells, SEMA5A stimulation of PLXNB3 results in the disassembly of F-actin stress fibers, disruption of focal adhesions and cellular collapse as well as inhibition of cell migration and invasion through ARHGDIA-mediated inactivation of RAC1. In Homo sapiens (Human), this protein is Plexin-B3 (PLXNB3).